Consider the following 92-residue polypeptide: PqqA binding protein (92 aa).

The protein belongs to the PqqD family. Monomer. Interacts with PqqE.

It functions in the pathway cofactor biosynthesis; pyrroloquinoline quinone biosynthesis. Its function is as follows. Functions as a PqqA binding protein and presents PqqA to PqqE, in the pyrroloquinoline quinone (PQQ) biosynthetic pathway. In Stutzerimonas stutzeri (strain A1501) (Pseudomonas stutzeri), this protein is PqqA binding protein.